A 335-amino-acid polypeptide reads, in one-letter code: Anthranilate phosphoribosyltransferase (335 aa).

Residues glycine 79, 82-83 (GD), serine 87, 89-92 (NIST), 107-115 (KHGNRSITS), and serine 119 each bind 5-phospho-alpha-D-ribose 1-diphosphate. An anthranilate-binding site is contributed by glycine 79. Serine 91 is a Mg(2+) binding site. Asparagine 110 is a binding site for anthranilate. Anthranilate is bound at residue arginine 165. Mg(2+)-binding residues include aspartate 224 and glutamate 225.

Belongs to the anthranilate phosphoribosyltransferase family. Homodimer. Mg(2+) serves as cofactor.

The enzyme catalyses N-(5-phospho-beta-D-ribosyl)anthranilate + diphosphate = 5-phospho-alpha-D-ribose 1-diphosphate + anthranilate. It participates in amino-acid biosynthesis; L-tryptophan biosynthesis; L-tryptophan from chorismate: step 2/5. Functionally, catalyzes the transfer of the phosphoribosyl group of 5-phosphorylribose-1-pyrophosphate (PRPP) to anthranilate to yield N-(5'-phosphoribosyl)-anthranilate (PRA). The chain is Anthranilate phosphoribosyltransferase from Lactococcus lactis subsp. lactis (strain IL1403) (Streptococcus lactis).